The chain runs to 474 residues: MKLSMPRFDQAPVLVVGDVMLDRYWHGATSRISPEAPVPVVRVEQHEDRPGGAANVALNIAALGAQALLVGVTGRDEAADSLANSLKAAGVDARFQRIDSQPTIVKLRVMSRHQQLLRVDFEEPFRTDAAALAVDVESLLAKVKVLVLSDYGKGALQNHQVLIQAARARNIPVLADPKGKDFAIYRGASLITPNLSEFETIVGRCADEAELVAKGQALMSELDLGALLVTRGEHGMTLLRHGQPALHLPARAREVFDVTGAGDTVISTLAAALAAGEELPSAVGLANLAAGIVVGKLGTAAISAPELRRAVQREQGSERGVLGLEQLLLAIEDARAHGEKIVFTNGCFDILHAGHVTYLEQARAQGDRLIVGVNDDASVTRLKGVGRPINSVDRRMAVLAGLGAVDWVVSFAEDTPERLLEQVRPDVLVKGGDYGVEQVVGAQIVKAYGGEVRVLGLVENSSTTAIVEKIRQKG.

The interval Met1 to Glu318 is ribokinase. An ATP-binding site is contributed by Asn194–Glu197. Asp263 is a catalytic residue. A cytidylyltransferase region spans residues Phe343–Gly474.

This sequence in the N-terminal section; belongs to the carbohydrate kinase PfkB family. It in the C-terminal section; belongs to the cytidylyltransferase family. Homodimer.

It catalyses the reaction D-glycero-beta-D-manno-heptose 7-phosphate + ATP = D-glycero-beta-D-manno-heptose 1,7-bisphosphate + ADP + H(+). The catalysed reaction is D-glycero-beta-D-manno-heptose 1-phosphate + ATP + H(+) = ADP-D-glycero-beta-D-manno-heptose + diphosphate. Its pathway is nucleotide-sugar biosynthesis; ADP-L-glycero-beta-D-manno-heptose biosynthesis; ADP-L-glycero-beta-D-manno-heptose from D-glycero-beta-D-manno-heptose 7-phosphate: step 1/4. The protein operates within nucleotide-sugar biosynthesis; ADP-L-glycero-beta-D-manno-heptose biosynthesis; ADP-L-glycero-beta-D-manno-heptose from D-glycero-beta-D-manno-heptose 7-phosphate: step 3/4. It functions in the pathway bacterial outer membrane biogenesis; LPS core biosynthesis. In terms of biological role, catalyzes the phosphorylation of D-glycero-D-manno-heptose 7-phosphate at the C-1 position to selectively form D-glycero-beta-D-manno-heptose-1,7-bisphosphate. Its function is as follows. Catalyzes the ADP transfer from ATP to D-glycero-beta-D-manno-heptose 1-phosphate, yielding ADP-D-glycero-beta-D-manno-heptose. The sequence is that of Bifunctional protein HldE from Pseudomonas aeruginosa (strain ATCC 15692 / DSM 22644 / CIP 104116 / JCM 14847 / LMG 12228 / 1C / PRS 101 / PAO1).